Here is a 22-residue protein sequence, read N- to C-terminus: Conotoxin MIIIJ (22 aa).

At Q1 the chain carries Pyrrolidone carboxylic acid. Cystine bridges form between C3–C21, C4–C19, and C9–C22.

It belongs to the conotoxin M superfamily. In terms of tissue distribution, expressed by the venom duct.

It is found in the secreted. In terms of biological role, probable competitive antagonist of fish muscle acetylcholine receptor. Inhibits postsynaptic nicotinic acetylcholine receptors (nAChRs) from fish (zebrafish and goldfish) and frogs (IC(50)=0.1 uM). Protects these receptors from block by alpha-bungarotoxin and alpha-conotoxin EI. Does not block nAChRs at the neuromuscular junction of Rana pipiens. Shows a weak inhibition on mammalian adult and fetal muscle nAChRs (alpha-1-beta-1-delta-epsilon/CHRNA1-CHRNB1-CHRND-CHRNE and alpha-1 beta-1 gamma delta/CHRNA1-CHRNB1-CHRNG-CHRND) (IC(50)=3-45 uM). In vivo, induces paralysis in goldfish (Carassius auratus) but not mice. This is Conotoxin MIIIJ from Conus magus (Magical cone).